Consider the following 789-residue polypeptide: MHKHIRKAAVLGSGVMGSGIAAHLANIGIPVLLLDIVPNDLTKEEEKKGLTKDSSEVRSRLSRQAMKKLLKQKPAPLTSAKNTSYITPGNLEDDAEKLKEADWIIEVVVENLEVKKKIFALVDEHRKTGSIVSSNTSGISVQEMAEGRSDDFKAHFLGTHFFNPARYLKLLEIIPIKETDPDILKFMTAFGENVLGKGVVTAKDTPNFIANRIGTYGLLVTVQEMLKGGYQVGEVDSITGPLIGRPKSATFRTLDVVGLDTFAHVARNVYDKADGDEKEVFRIPSFMNDMLEKGWIGSKAGQGFYKKEGKTIYELDPVTLTYGERTKMKSPALEAAKQAKGTKAKMKALIYSDDRAGRLLWNITSQTLLYSAELLGEIADDIHAIDQAMKWGFGWELGPFEMWDAIGLKQSAEKLEQLGADMPGWIKEMLDKGNETFYIKENGTVFYYDRGEYRAVKENKKRIHLQALKETKGVIAKNSGASLIDLGDDVALLEFHSKSNAIGLDIIQMIHKGLEETERNYKGLVIGNQGKNFCVGANLAMILMEVQDDNFLEVDFVIRRFQETMMKIKYSAKPVVAAPFGMTLGGGTEACLPAARIQAASEAYMGLVESGVGLIPGGGGNKELYINHLRRGHDPMNAAMKTFETIAMAKVSASAQEAREMNILKETDQISVNQDHLLYDAKQLAASLYDTGWRPPVKEKVKVPGETGYAALLLGAEQMKLSGYISEHDFKIAKKLAYVIAGGKVPFGTEVDEEYLLEIEREAFLSLSGEAKSQARMQHMLVKGKPLRN.

The protein belongs to the 3-hydroxyacyl-CoA dehydrogenase family.

It carries out the reaction a (3S)-3-hydroxyacyl-CoA + NAD(+) = a 3-oxoacyl-CoA + NADH + H(+). The protein operates within lipid metabolism; fatty acid beta-oxidation. In terms of biological role, involved in the degradation of long-chain fatty acids. In Bacillus subtilis (strain 168), this protein is Probable 3-hydroxyacyl-CoA dehydrogenase (fadN).